The primary structure comprises 137 residues: Putative pre-16S rRNA nuclease (137 aa).

Belongs to the YqgF nuclease family.

It is found in the cytoplasm. In terms of biological role, could be a nuclease involved in processing of the 5'-end of pre-16S rRNA. This chain is Putative pre-16S rRNA nuclease, found in Bacillus cereus (strain B4264).